A 300-amino-acid chain; its full sequence is ClpXP adapter protein SpxH (300 aa).

This sequence belongs to the SpxH family. In terms of assembly, interacts with Spx.

Its subcellular location is the cytoplasm. Functionally, adapter protein required for efficient degradation of Spx by ClpXP under non-stress conditions. Interaction with Spx stabilizes Spx and exposes the C-terminus of Spx for recognition and proteolysis by ClpXP. The sequence is that of ClpXP adapter protein SpxH from Bacillus licheniformis (strain ATCC 14580 / DSM 13 / JCM 2505 / CCUG 7422 / NBRC 12200 / NCIMB 9375 / NCTC 10341 / NRRL NRS-1264 / Gibson 46).